An 810-amino-acid polypeptide reads, in one-letter code: F-BAR domain only protein 2 (810 aa).

One can recognise an F-BAR domain in the interval 3 to 250 (MAYFVENFWG…NMANTTVESL (248 aa)). The interval 3–274 (MAYFVENFWG…PGLIEFEECD (272 aa)) is mediates dimerization and binding to membranes enriched in Pi(4,5)-P2 and induces their tubulation. Residues 87–156 (HLDLVRKLQE…CVEQERLKKE (70 aa)) are a coiled coil. Lys297 is covalently cross-linked (Glycyl lysine isopeptide (Lys-Gly) (interchain with G-Cter in SUMO2)). Residues 301–352 (DAESVECPDADSLNIPDVDEEGYSIKPETNQNDTKENHFYSSSDSDSEDEEP) are disordered. The residue at position 312 (Ser312) is a Phosphoserine. Phosphothreonine is present on Thr385. A phosphoserine mark is found at Ser387, Ser394, and Ser403. The tract at residues 404–537 (NEELTKSKPS…VSRGPSPVSL (134 aa)) is disordered. Over residues 433–456 (PSLDSSSSSSLTSSSSARPTTPLS) the composition is skewed to low complexity. Phosphoserine is present on residues Ser488, Ser493, Ser496, Ser508, Ser510, Ser511, and Ser533. A compositionally biased stretch (low complexity) spans 502–521 (PLARAESSSSISSSASLSAA). The interval 521–810 (ANTPTVGVSR…FATGRYLADC (290 aa)) is mediates interaction with DAB2, EPS15, EPS15R and ITSN1. Residues 542–809 (TLPVAVALTE…RFATGRYLAD (268 aa)) form the MHD domain.

This sequence belongs to the FCHO family. As to quaternary structure, homodimer; disulfide-linked. May form homotetramer. Interacts with AP2A1. Interacts with EPS15, EPS15R, ITSN1 and ITSN2; recruit those scaffolding proteins which in turn may interact with the adaptor protein complex AP-2 at the plasma membrane. Interacts with DAB2 (via DPF motifs); mediates LDL receptor/LDLR endocytosis. Ubiquitinated. Mainly undergoes monoubiquitination but also polyubiquitination.

The protein resides in the membrane. It localises to the clathrin-coated pit. Its function is as follows. Functions in an early step of clathrin-mediated endocytosis. Has both a membrane binding/bending activity and the ability to recruit proteins essential to the formation of functional clathrin-coated pits. Has a lipid-binding activity with a preference for membranes enriched in phosphatidylserine and phosphoinositides (Pi(4,5) biphosphate) like the plasma membrane. Its membrane-bending activity might be important for the subsequent action of clathrin and adaptors in the formation of clathrin-coated vesicles. Involved in adaptor protein complex AP-2-dependent endocytosis of the transferrin receptor, it also functions in the AP-2-independent endocytosis of the LDL receptor. This chain is F-BAR domain only protein 2 (FCHO2), found in Homo sapiens (Human).